The sequence spans 786 residues: Protein translocase subunit SecA 1 (786 aa).

ATP contacts are provided by residues glutamine 85, 103–107 (GEGKT), and aspartate 491.

Belongs to the SecA family. As to quaternary structure, monomer and homodimer. Part of the essential Sec protein translocation apparatus which comprises SecA, SecYEG and auxiliary proteins SecDF. Other proteins may also be involved.

Its subcellular location is the cell membrane. The protein resides in the cytoplasm. The enzyme catalyses ATP + H2O + cellular proteinSide 1 = ADP + phosphate + cellular proteinSide 2.. Its function is as follows. Part of the Sec protein translocase complex. Interacts with the SecYEG preprotein conducting channel. Has a central role in coupling the hydrolysis of ATP to the transfer of proteins into and across the cell membrane, serving as an ATP-driven molecular motor driving the stepwise translocation of polypeptide chains across the membrane. This Pediococcus pentosaceus (strain ATCC 25745 / CCUG 21536 / LMG 10740 / 183-1w) protein is Protein translocase subunit SecA 1.